Consider the following 582-residue polypeptide: Adenine deaminase (582 aa).

This sequence belongs to the metallo-dependent hydrolases superfamily. Adenine deaminase family. The cofactor is Mn(2+).

It carries out the reaction adenine + H2O + H(+) = hypoxanthine + NH4(+). The polypeptide is Adenine deaminase (Oceanobacillus iheyensis (strain DSM 14371 / CIP 107618 / JCM 11309 / KCTC 3954 / HTE831)).